Reading from the N-terminus, the 383-residue chain is Queuine tRNA-ribosyltransferase (383 aa).

Residue Asp-95 is the Proton acceptor of the active site. Substrate-binding positions include 95 to 99, Asp-149, Gln-195, and Gly-222; that span reads DSGGF. Positions 253 to 259 are RNA binding; sequence GVGSPDS. The active-site Nucleophile is Asp-272. The interval 277–281 is RNA binding; important for wobble base 34 recognition; that stretch reads TRIAR. Zn(2+) is bound by residues Cys-310, Cys-312, Cys-315, and His-341.

The protein belongs to the queuine tRNA-ribosyltransferase family. As to quaternary structure, homodimer. Within each dimer, one monomer is responsible for RNA recognition and catalysis, while the other monomer binds to the replacement base PreQ1. The cofactor is Zn(2+).

The enzyme catalyses 7-aminomethyl-7-carbaguanine + guanosine(34) in tRNA = 7-aminomethyl-7-carbaguanosine(34) in tRNA + guanine. Its pathway is tRNA modification; tRNA-queuosine biosynthesis. Catalyzes the base-exchange of a guanine (G) residue with the queuine precursor 7-aminomethyl-7-deazaguanine (PreQ1) at position 34 (anticodon wobble position) in tRNAs with GU(N) anticodons (tRNA-Asp, -Asn, -His and -Tyr). Catalysis occurs through a double-displacement mechanism. The nucleophile active site attacks the C1' of nucleotide 34 to detach the guanine base from the RNA, forming a covalent enzyme-RNA intermediate. The proton acceptor active site deprotonates the incoming PreQ1, allowing a nucleophilic attack on the C1' of the ribose to form the product. After dissociation, two additional enzymatic reactions on the tRNA convert PreQ1 to queuine (Q), resulting in the hypermodified nucleoside queuosine (7-(((4,5-cis-dihydroxy-2-cyclopenten-1-yl)amino)methyl)-7-deazaguanosine). The polypeptide is Queuine tRNA-ribosyltransferase (Shouchella clausii (strain KSM-K16) (Alkalihalobacillus clausii)).